The chain runs to 577 residues: MSVTLRFRSREGTFRVAANPDADFLLVLEQLLSKISIEDVQNLYLSDKPNSKGELANGLCGKTVTELGLKNGDMLYASYEAATGSNPDSTTNITTSTNNHNSGSISIGHISIPTTTSGPRKVTQLPVDDVLEKDEGLIKRPLTKFCRHGAKGMCEFCSPLPPWDANYRKENAIKHMSYHAYLKELNELKNSKHNSSSYIAPLEEPNYSILLNCNEGHQPYPKGICSKCQPPPITLQLQKFRMVDHVEFATSSIMNNFIDVWRHTGVQRFGVMYGRYEPFDKVPLGIKAVVEAIYEPPQSGELDGITMLPWENEAEVDAIASELGIYKVGVVFTDLTDSGQKNGTVLCKRHKDSYFLSNLEILMAARNQIQHANITKFSSSGQFSSKFVTCVISGGLNGEIEPRSYQVSTSAEALVRADIITGSTQPSRLYVNSSNDRRYVPDVAYSELNEYGLEVKSNAKPTFPVDFLLVSLTDSFPVNPTPMFDTDSNFVIENRDFFNELQNLHAVSKYLNADTSGKGTSLCNFHFLVYLKRTNILGAQEFDLLLRFVRERQYEDYLHLVESPGWMTLITILEQST.

The region spanning 246–383 is the MPN domain; the sequence is VEFATSSIMN…ITKFSSSGQF (138 aa).

This sequence belongs to the NPL4 family.

The protein localises to the cytoplasm. It is found in the perinuclear region. Its subcellular location is the endoplasmic reticulum membrane. The protein resides in the nucleus membrane. In terms of biological role, involved in the import of nuclear-targeted proteins into the nucleus and the export of poly(A) RNA out of the nucleus. Has a role in the endoplasmic reticulum-associated degradation (ERAD) pathway. In Scheffersomyces stipitis (strain ATCC 58785 / CBS 6054 / NBRC 10063 / NRRL Y-11545) (Yeast), this protein is Nuclear protein localization protein 4 (NPL4).